A 172-amino-acid polypeptide reads, in one-letter code: S-ribosylhomocysteine lyase (172 aa).

His54, His58, and Cys128 together coordinate Fe cation.

This sequence belongs to the LuxS family. As to quaternary structure, homodimer. Fe cation serves as cofactor.

It carries out the reaction S-(5-deoxy-D-ribos-5-yl)-L-homocysteine = (S)-4,5-dihydroxypentane-2,3-dione + L-homocysteine. Involved in the synthesis of autoinducer 2 (AI-2) which is secreted by bacteria and is used to communicate both the cell density and the metabolic potential of the environment. The regulation of gene expression in response to changes in cell density is called quorum sensing. Catalyzes the transformation of S-ribosylhomocysteine (RHC) to homocysteine (HC) and 4,5-dihydroxy-2,3-pentadione (DPD). This is S-ribosylhomocysteine lyase from Vibrio atlanticus (strain LGP32) (Vibrio splendidus (strain Mel32)).